The chain runs to 60 residues: Large ribosomal subunit protein uL30 (60 aa).

The protein belongs to the universal ribosomal protein uL30 family. Part of the 50S ribosomal subunit.

This Leuconostoc citreum (strain KM20) protein is Large ribosomal subunit protein uL30.